The sequence spans 844 residues: Translation elongation factor 2 (844 aa).

Residues 17 to 348 form the tr-type G domain; the sequence is RNIRNMSVIA…MIAIHLPSPV (332 aa). A GTP-binding site is contributed by 26–33; that stretch reads AHVDHGKS. A phosphothreonine mark is found at Thr57 and Thr59. GTP is bound by residues 162–165 and 219–221; these read NKMD and SGL. Ser488 carries the phosphoserine modification. His701 carries the post-translational modification Diphthamide.

This sequence belongs to the TRAFAC class translation factor GTPase superfamily. Classic translation factor GTPase family. EF-G/EF-2 subfamily. Post-translationally, phosphorylation by EF-2 kinase completely inactivates EF-2.

The protein resides in the cytoplasm. The enzyme catalyses GTP + H2O = GDP + phosphate + H(+). Functionally, catalyzes the GTP-dependent ribosomal translocation step during translation elongation. During this step, the ribosome changes from the pre-translocational (PRE) to the post-translocational (POST) state as the newly formed A-site-bound peptidyl-tRNA and P-site-bound deacylated tRNA move to the P and E sites, respectively. Catalyzes the coordinated movement of the two tRNA molecules, the mRNA and conformational changes in the ribosome. This chain is Translation elongation factor 2, found in Bombyx mori (Silk moth).